A 91-amino-acid polypeptide reads, in one-letter code: Small ribosomal subunit protein uS19 (91 aa).

It belongs to the universal ribosomal protein uS19 family.

Protein S19 forms a complex with S13 that binds strongly to the 16S ribosomal RNA. This is Small ribosomal subunit protein uS19 from Synechococcus sp. (strain RCC307).